Here is a 202-residue protein sequence, read N- to C-terminus: IMP cyclohydrolase (202 aa).

The protein belongs to the archaeal IMP cyclohydrolase family.

It carries out the reaction IMP + H2O = 5-formamido-1-(5-phospho-D-ribosyl)imidazole-4-carboxamide. The protein operates within purine metabolism; IMP biosynthesis via de novo pathway; IMP from 5-formamido-1-(5-phospho-D-ribosyl)imidazole-4-carboxamide: step 1/1. In terms of biological role, catalyzes the cyclization of 5-formylamidoimidazole-4-carboxamide ribonucleotide to IMP. This chain is IMP cyclohydrolase, found in Methanosphaera stadtmanae (strain ATCC 43021 / DSM 3091 / JCM 11832 / MCB-3).